A 208-amino-acid chain; its full sequence is Imidazole glycerol phosphate synthase subunit HisH (208 aa).

Residues 1 to 206 form the Glutamine amidotransferase type-1 domain; sequence MIVIIDYDTG…KEVIRSCKSS (206 aa). The Nucleophile role is filled by Cys-79. Active-site residues include His-181 and Glu-183.

Heterodimer of HisH and HisF.

It localises to the cytoplasm. It catalyses the reaction 5-[(5-phospho-1-deoxy-D-ribulos-1-ylimino)methylamino]-1-(5-phospho-beta-D-ribosyl)imidazole-4-carboxamide + L-glutamine = D-erythro-1-(imidazol-4-yl)glycerol 3-phosphate + 5-amino-1-(5-phospho-beta-D-ribosyl)imidazole-4-carboxamide + L-glutamate + H(+). The catalysed reaction is L-glutamine + H2O = L-glutamate + NH4(+). It functions in the pathway amino-acid biosynthesis; L-histidine biosynthesis; L-histidine from 5-phospho-alpha-D-ribose 1-diphosphate: step 5/9. IGPS catalyzes the conversion of PRFAR and glutamine to IGP, AICAR and glutamate. The HisH subunit catalyzes the hydrolysis of glutamine to glutamate and ammonia as part of the synthesis of IGP and AICAR. The resulting ammonia molecule is channeled to the active site of HisF. This is Imidazole glycerol phosphate synthase subunit HisH from Listeria monocytogenes serotype 4b (strain CLIP80459).